We begin with the raw amino-acid sequence, 651 residues long: MQTLPSSETVLLGSNSAPPVLRSPGGDDVDIDFGDVFGGPPKRRSKVTSNEVTRHSFSESALRRRDVIVDVGDLLPQDEKPVFGEDTSSVRRRFTTDDFFDDIFRVNESSSLPGSRILSPAHKPESSSGTSSPSQFSLPAKATEIPTFNLAATRSLNKNKETVSSSPLSRTSSKADVVSTAKSYSDDCDDPPQVFVTGKGRQFHFSIYKWPNKGVPVVIWGSSRLSSMSKAEETTPVPLSDYRKTSVVEKLGKNEEGDGKSGLSGLKDVKKTSLKRPGVQTKEEKTETDLKSEQAFFGVSKAREANVKPLDSVESEQAFSGVSKAHEATTVKPLHSIFHEEDERQDEKIVSEREVRKGKSKAKNTRSFTEDSRTKKKSQGTKSSLDSSPIPDKSSFASSSAAPEVGKDGVKGKVSDFVKIFSKGASVGAGGESLGQSSRWRAKETPKTDIIHDGSNAKETVNIPDQQKKSTPDIPAMNRDQKPSQSTQKKDSDRESMNYKAPGDTVQEERQEPSTTHTTSEDIDEPFHVNFDVEDITQDENKMEEANKDAEEIKNIDAKIRKWSSGKSGNIRSLLSTLQYILWSGSGWKPVPLMDMIEGNAVRKSYQRALLILHPDKLQQKGASANQKYMAEKVFELLQEAWDHFNTLGPV.

Over residues 1–17 (MQTLPSSETVLLGSNSA) the composition is skewed to polar residues. 5 disordered regions span residues 1–56 (MQTL…TRHS), 114–138 (GSRI…QFSL), 156–176 (LNKN…SKAD), 250–291 (KLGK…TDLK), and 308–526 (KPLD…IDEP). Serine 56 bears the Phosphoserine mark. A compositionally biased stretch (low complexity) spans 126-137 (SSSGTSSPSQFS). Basic and acidic residues-rich tracts occupy residues 250-259 (KLGKNEEGDG), 281-291 (TKEEKTETDLK), 337-357 (IFHE…EVRK), 405-416 (VGKDGVKGKVSD), 441-456 (RAKE…DGSN), and 488-497 (QKKDSDRESM). Residues 532-562 (DVEDITQDENKMEEANKDAEEIKNIDAKIRK) adopt a coiled-coil conformation. The 66-residue stretch at 586–651 (SGWKPVPLMD…WDHFNTLGPV (66 aa)) folds into the J domain.

As to expression, expressed in leaves and stems, but not in roots.

Its subcellular location is the cytoplasm. Functionally, required for chloroplast photorelocation movement; chloroplast accumulation upon low blue light and for chloroplast movement to the bottom of cells in darkness, by modulating chloroplast actin (Cp-actin) filaments distribution, appearance and disappearance. May mediate a slight resistance to aluminum in root hair cells. This is J domain-containing protein required for chloroplast accumulation response 1 (JAC1) from Arabidopsis thaliana (Mouse-ear cress).